Reading from the N-terminus, the 440-residue chain is Golgi reassembly-stacking protein 1 (440 aa).

Glycine 2 carries the N-myristoyl glycine lipid modification. 2 PDZ GRASP-type domains span residues 15-105 (EGFH…FCSF) and 111-199 (QVWH…YGYL). A GRASP region spans residues 15–215 (EGFHLHGVQE…PPSYHKKPPG (201 aa)). Residues histidine 18, histidine 20, and cysteine 103 each contribute to the Zn(2+) site. The interval 190 to 202 (LGCGIGYGYLHRI) is essential for interaction with GOLGA2/GM130. Disordered stretches follow at residues 205–248 (QPPS…ETGS), 261–301 (PGSS…PVQR), and 327–440 (LPSS…STTE). The span at 214 to 239 (PGTPPPSALPLGAPPPDALPPGPTPE) shows a compositional bias: pro residues. Threonine 216 is modified (phosphothreonine). The span at 327–336 (LPSSTELTTT) shows a compositional bias: low complexity. Residues 337-351 (AVSTSGPEDICSSSS) are compositionally biased toward polar residues. A phosphoserine mark is found at serine 362, serine 364, and serine 373.

This sequence belongs to the GORASP family. As to quaternary structure, homodimer. Forms higher-order oligomers under interphase but not mitotic conditions. Dimers of the protein on one membrane might be able to interact with dimers on another and so stack cisternae. Interacts with the C-terminus of GOLGA2/GM130 under both mitotic and non-mitotic conditions. The interaction is critical for the correct targeting of both proteins to the cis-Golgi. Interacts with TMED2 and TMED3. Post-translationally, phosphorylated by CDC2/B1 and PLK kinases during mitosis. Phosphorylation cycle correlates with the cisternal stacking cycle. Phosphorylation of the homodimer prevents the association of dimers into higher-order oligomers, leading to cisternal unstacking. In terms of processing, target for caspase-3 cleavage during apoptosis. The cleavage contributes to Golgi fragmentation and occurs very early in the execution phase of apoptosis. Myristoylated.

It is found in the golgi apparatus. The protein localises to the cis-Golgi network membrane. Its subcellular location is the endoplasmic reticulum-Golgi intermediate compartment membrane. In terms of biological role, key structural protein of the Golgi apparatus. The membrane cisternae of the Golgi apparatus adhere to each other to form stacks, which are aligned side by side to form the Golgi ribbon. Acting in concert with GORASP2/GRASP55, is required for the formation and maintenance of the Golgi ribbon, and may be dispensable for the formation of stacks. However, other studies suggest that GORASP1 plays an important role in assembly and membrane stacking of the cisternae, and in the reassembly of Golgi stacks after breakdown during mitosis. Caspase-mediated cleavage of GORASP1 is required for fragmentation of the Golgi during apoptosis. Also mediates, via its interaction with GOLGA2/GM130, the docking of transport vesicles with the Golgi membranes. Mediates ER stress-induced unconventional (ER/Golgi-independent) trafficking of core-glycosylated CFTR to cell membrane. The sequence is that of Golgi reassembly-stacking protein 1 (GORASP1) from Homo sapiens (Human).